Here is a 284-residue protein sequence, read N- to C-terminus: NAD kinase (284 aa).

The active-site Proton acceptor is the Asp70. Residues 70 to 71 (DG), 139 to 140 (NE), Lys167, Asp169, Leu177, 180 to 185 (TAYNLS), and Gln236 contribute to the NAD(+) site.

The protein belongs to the NAD kinase family. The cofactor is a divalent metal cation.

The protein localises to the cytoplasm. It catalyses the reaction NAD(+) + ATP = ADP + NADP(+) + H(+). In terms of biological role, involved in the regulation of the intracellular balance of NAD and NADP, and is a key enzyme in the biosynthesis of NADP. Catalyzes specifically the phosphorylation on 2'-hydroxyl of the adenosine moiety of NAD to yield NADP. In Helicobacter pylori (strain ATCC 700392 / 26695) (Campylobacter pylori), this protein is NAD kinase.